Consider the following 91-residue polypeptide: Small ribosomal subunit protein uS19 (91 aa).

Belongs to the universal ribosomal protein uS19 family.

Functionally, protein S19 forms a complex with S13 that binds strongly to the 16S ribosomal RNA. In Metamycoplasma hominis (strain ATCC 23114 / DSM 25592 / NBRC 14850 / NCTC 10111 / PG21) (Mycoplasma hominis), this protein is Small ribosomal subunit protein uS19.